The primary structure comprises 482 residues: Probable polyamine transporter At1g31820 (482 aa).

11 helical membrane passes run 36–56 (VSML…PFGA), 66–86 (LLAL…EALI), 94–114 (FPIN…FWGF), 143–163 (VPAL…TLLL), 171–191 (LTIV…PFAV), 254–274 (VIFV…AIPL), 294–314 (GWLQ…MFLA), 344–364 (TPLL…GLSF), 367–387 (IIAA…IAFV), 406–426 (TVGS…VIVL), and 429–449 (IKVA…KPCL).

This sequence belongs to the amino acid-polyamine-organocation (APC) superfamily. Polyamine:cation symporter (PHS) (TC 2.A.3.12) family.

It is found in the cell membrane. Probable cell membrane polyamine/proton symporter involved in the polyamine uptake in cells. The chain is Probable polyamine transporter At1g31820 from Arabidopsis thaliana (Mouse-ear cress).